The chain runs to 246 residues: MFAAIASGNPLQLSVEVPNSNGLQHTIVLSRTKPKLYSHITLFILPNVTFPQDYIATVYFKLSPQEEFKLFGYLSSEKPSAIFKVQIPSSKKDAGDTSDGLGEIDMDVDDGSGAADPFTDTNGSSSNNISELIIGISIEPREQGMMKLEEWKASMNAEAQKNNSLILSRPNLGIIRNITTAGQLAQVYPSLTQELAAKIVQHAYNYLSGFLDAQGNVPIKRFDTWWDKFRNRLANDGTFLDEVTKN.

Belongs to the OPI10 family.

It localises to the cytoplasm. The protein localises to the nucleus. Functionally, involved in phospholipid biosynthesis. This is Protein OPI10 (OPI10) from Saccharomyces cerevisiae (strain ATCC 204508 / S288c) (Baker's yeast).